Reading from the N-terminus, the 171-residue chain is Synaptonemal complex central element protein 2 (171 aa).

The disordered stretch occupies residues Met1 to Phe52. Basic and acidic residues predominate over residues Ser24 to Thr36. Coiled-coil stretches lie at residues Phe52–Leu83 and Gln118–Glu146.

This sequence belongs to the SYCE family. Homodimer. Found in a complex with SYCP1 and SYCE1. Interacts with SYCP1 and SYCE1. Interacts with SYCE3. Interacts with TEX12. Meiotic cells (at protein level). Expressed in the ovary and testis.

It is found in the nucleus. The protein localises to the chromosome. Functionally, major component of the transverse central element of synaptonemal complexes (SCS), formed between homologous chromosomes during meiotic prophase. Requires SYCP1 in order to be incorporated into the central element. May have a role in the synaptonemal complex assembly, stabilization and recombination. The polypeptide is Synaptonemal complex central element protein 2 (Syce2) (Mus musculus (Mouse)).